The chain runs to 361 residues: Probable cytosolic iron-sulfur protein assembly protein 1 (361 aa).

7 WD repeats span residues 10-49, 56-105, 120-160, 167-206, 213-265, 280-319, and 327-361; these read AHSDKAWSVSAHKTVPLLATASTDKTSKIYKLSVKQNFPQ, THKR…TEIL, GHEN…EEFE, DHQHDIKHVVWHPHQNLLASSSYDDTIRLYKQDLDDDDWS, GHEG…SIKH, VHQYPIYSVAWSAQSGKIATVGSDGKIVIYIEGDDNSWSI, and HGVHEINSIIWALLDDQSEVLVTAGDDGCVNIWKP.

The protein belongs to the WD repeat CIA1 family. Interacts with NAR1.

The protein localises to the cytoplasm. It is found in the nucleus. Its function is as follows. Essential component of the cytosolic iron-sulfur (Fe/S) protein assembly machinery. Required for the maturation of extramitochondrial Fe/S proteins. The polypeptide is Probable cytosolic iron-sulfur protein assembly protein 1 (Scheffersomyces stipitis (strain ATCC 58785 / CBS 6054 / NBRC 10063 / NRRL Y-11545) (Yeast)).